The following is a 345-amino-acid chain: Leucine-rich repeat-containing protein 69 (345 aa).

LRR repeat units follow at residues 13 to 34 (KAKT…VGCL), 36 to 58 (SLTE…SALC), 59 to 80 (RLRV…IKYL), 82 to 103 (CLER…ALDG), 106 to 127 (NLLF…IYKL), 129 to 151 (SLET…CFLQ), 152 to 173 (NLQE…LSYL), 175 to 196 (NLKE…ICKL), 198 to 219 (KLKI…MHRV), and 220 to 241 (PLTE…FARQ).

The protein belongs to the LRRC69 family.

This chain is Leucine-rich repeat-containing protein 69 (lrrc69), found in Xenopus laevis (African clawed frog).